Consider the following 226-residue polypeptide: 2-dehydro-3-deoxy-phosphogluconate aldolase (226 aa).

Glutamate 57 (proton acceptor) is an active-site residue. The pyruvate site is built by arginine 61, threonine 85, and lysine 145. Lysine 145 (schiff-base intermediate with substrate) is an active-site residue.

It belongs to the KHG/KDPG aldolase family. Homotrimer.

The catalysed reaction is 2-dehydro-3-deoxy-6-phospho-D-gluconate = D-glyceraldehyde 3-phosphate + pyruvate. It participates in carbohydrate acid metabolism; 2-dehydro-3-deoxy-D-gluconate degradation; D-glyceraldehyde 3-phosphate and pyruvate from 2-dehydro-3-deoxy-D-gluconate: step 2/2. In terms of biological role, involved in the degradation of glucose via the Entner-Doudoroff pathway. Catalyzes the reversible, stereospecific retro-aldol cleavage of 2-keto-3-deoxy-6-phosphogluconate (KDPG) to pyruvate and D-glyceraldehyde-3-phosphate. The polypeptide is 2-dehydro-3-deoxy-phosphogluconate aldolase (Pseudomonas putida (Arthrobacter siderocapsulatus)).